A 284-amino-acid polypeptide reads, in one-letter code: Nucleotide-binding protein CPS_4546 (284 aa).

8 to 15 (GRSGSGKS) is an ATP binding site. 56-59 (DVRN) contacts GTP.

The protein belongs to the RapZ-like family.

Displays ATPase and GTPase activities. The sequence is that of Nucleotide-binding protein CPS_4546 from Colwellia psychrerythraea (strain 34H / ATCC BAA-681) (Vibrio psychroerythus).